The chain runs to 340 residues: Tetrathionate reductase subunit C (340 aa).

9 helical membrane-spanning segments follow: residues 19–39 (WLPWAVQYFFFIGIAACAALF), 57–77 (ALLIAITCAITAPLALTADLH), 94–114 (WMPWGALFLPLFTGFLALWFL), 128–148 (VTKWLALASALCAVGLLIYTG), 164–184 (AFPVAMFLSALQAFFALMIVA), 195–215 (ILWGQIWTLAALGLVVAMWVS), 236–256 (YYAVGWVALWVCTLLFCSLAL), 266–286 (VLLVLSALALCWLMRWTLLIQ), and 306–326 (TDGWLAILGTFGLWIALLIII).

This sequence belongs to the NrfD family. As to quaternary structure, probably composed of three subunits: TtrA, TtrB and TtrC.

The protein localises to the cell inner membrane. Its function is as follows. Part of a membrane-bound tetrathionate reductase that catalyzes the reduction of tetrathionate to thiosulfate. TtrC probably anchors TtrA and TtrB to the periplasmic face of the cytoplasmic membrane. May transfer electrons from membrane quinol to TtrB. During mice infection, the ability to use tetrathionate as an electron acceptor is a growth advantage for S.typhimurium over the competing microbiota in the lumen of the inflamed gut. The polypeptide is Tetrathionate reductase subunit C (ttrC) (Salmonella typhimurium (strain LT2 / SGSC1412 / ATCC 700720)).